Here is a 91-residue protein sequence, read N- to C-terminus: Small ribosomal subunit protein bS18 (91 aa).

The segment covering 1 to 14 (MTNQNQSQTQTTQT) has biased composition (low complexity). The disordered stretch occupies residues 1–24 (MTNQNQSQTQTTQTVEKVSSRQKK).

Belongs to the bacterial ribosomal protein bS18 family. Part of the 30S ribosomal subunit. Forms a tight heterodimer with protein bS6.

Functionally, binds as a heterodimer with protein bS6 to the central domain of the 16S rRNA, where it helps stabilize the platform of the 30S subunit. In Caldicellulosiruptor saccharolyticus (strain ATCC 43494 / DSM 8903 / Tp8T 6331), this protein is Small ribosomal subunit protein bS18.